The chain runs to 636 residues: 1,4-alpha-glucan branching enzyme GlgB (636 aa).

The active-site Nucleophile is the Asp309. Glu362 (proton donor) is an active-site residue.

It belongs to the glycosyl hydrolase 13 family. GlgB subfamily. In terms of assembly, monomer.

It catalyses the reaction Transfers a segment of a (1-&gt;4)-alpha-D-glucan chain to a primary hydroxy group in a similar glucan chain.. Its pathway is glycan biosynthesis; glycogen biosynthesis. Catalyzes the formation of the alpha-1,6-glucosidic linkages in glycogen by scission of a 1,4-alpha-linked oligosaccharide from growing alpha-1,4-glucan chains and the subsequent attachment of the oligosaccharide to the alpha-1,6 position. The protein is 1,4-alpha-glucan branching enzyme GlgB of Aromatoleum aromaticum (strain DSM 19018 / LMG 30748 / EbN1) (Azoarcus sp. (strain EbN1)).